The chain runs to 319 residues: Putative peptide permease protein BOV_A0351 (319 aa).

6 consecutive transmembrane segments (helical) span residues 9 to 29 (LLIGLGMLLALTILIFVLLQL), 102 to 122 (LLLMAAGLAIAIVIGVTTGII), 138 to 158 (LALLGISSPAFLTALLGLYVF), 182 to 202 (LLRHLALPALVLSIGHAALIM), 242 to 262 (LPVVTLIGSTIGLAVGGAIFI), and 284 to 304 (YPVIMGATLVIGACVIIVNIL). The ABC transmembrane type-1 domain maps to 98–305 (IGPTLLLMAA…ACVIIVNILT (208 aa)).

It belongs to the binding-protein-dependent transport system permease family. As to quaternary structure, the complex is composed of two ATP-binding proteins (BOV_A0347 and BOV_A0348), two transmembrane proteins (BOV_A0350 and BOV_A0351) and a solute-binding protein (BOV_A0352).

It is found in the cell inner membrane. Functionally, probably part of an ABC transporter complex that could be involved in peptide import. Probably responsible for the translocation of the substrate across the membrane. This Brucella ovis (strain ATCC 25840 / 63/290 / NCTC 10512) protein is Putative peptide permease protein BOV_A0351.